We begin with the raw amino-acid sequence, 736 residues long: Polyribonucleotide nucleotidyltransferase (736 aa).

Positions 493 and 499 each coordinate Mg(2+). The KH domain maps to 560–619; it reads PQHAELVVNPDAIRMIIGPGGKNIKQITTVTGAAIDINDSGKISIFAPTSEAMEQAKQMI. Residues 629–703 form the S1 motif domain; the sequence is GKNYKGKVRK…SRKAVLLEEE (75 aa). Residues 710–736 form a disordered region; that stretch reads EESSRFSKGNRNGDRSRHNNRERTRRT. The span at 720 to 736 shows a compositional bias: basic and acidic residues; the sequence is RNGDRSRHNNRERTRRT.

It belongs to the polyribonucleotide nucleotidyltransferase family. Mg(2+) is required as a cofactor.

The protein localises to the cytoplasm. The enzyme catalyses RNA(n+1) + phosphate = RNA(n) + a ribonucleoside 5'-diphosphate. Involved in mRNA degradation. Catalyzes the phosphorolysis of single-stranded polyribonucleotides processively in the 3'- to 5'-direction. This Lawsonia intracellularis (strain PHE/MN1-00) protein is Polyribonucleotide nucleotidyltransferase.